We begin with the raw amino-acid sequence, 585 residues long: Arginine--tRNA ligase (585 aa).

A 'HIGH' region motif is present at residues 131 to 141; the sequence is ANPTGPMHVGH.

Belongs to the class-I aminoacyl-tRNA synthetase family. Monomer.

The protein localises to the cytoplasm. It carries out the reaction tRNA(Arg) + L-arginine + ATP = L-arginyl-tRNA(Arg) + AMP + diphosphate. The polypeptide is Arginine--tRNA ligase (Brucella melitensis biotype 1 (strain ATCC 23456 / CCUG 17765 / NCTC 10094 / 16M)).